The following is a 409-amino-acid chain: D-galactonate dehydratase family member Achl_0790 (409 aa).

Residue Asp-217 participates in Mg(2+) binding. His-219 contacts D-arabinonate. Residues Glu-243 and Glu-269 each coordinate Mg(2+). Residues Glu-269, Arg-290, His-319, and Glu-346 each coordinate D-arabinonate.

This sequence belongs to the mandelate racemase/muconate lactonizing enzyme family. GalD subfamily.

In terms of biological role, has no detectable activity with D-mannonate and with a panel of 70 other acid sugars (in vitro), in spite of the conservation of the residues that are expected to be important for catalytic activity and cofactor binding. May have evolved a divergent function. The protein is D-galactonate dehydratase family member Achl_0790 of Pseudarthrobacter chlorophenolicus (strain ATCC 700700 / DSM 12829 / CIP 107037 / JCM 12360 / KCTC 9906 / NCIMB 13794 / A6) (Arthrobacter chlorophenolicus).